The primary structure comprises 381 residues: Alkanesulfonate monooxygenase (381 aa).

This sequence belongs to the SsuD family. Homotetramer.

It catalyses the reaction an alkanesulfonate + FMNH2 + O2 = an aldehyde + FMN + sulfite + H2O + 2 H(+). Functionally, catalyzes the desulfonation of aliphatic sulfonates. This chain is Alkanesulfonate monooxygenase, found in Escherichia coli O6:K15:H31 (strain 536 / UPEC).